The primary structure comprises 571 residues: Proline--tRNA ligase (571 aa).

This sequence belongs to the class-II aminoacyl-tRNA synthetase family. ProS type 1 subfamily. In terms of assembly, homodimer.

The protein localises to the cytoplasm. The enzyme catalyses tRNA(Pro) + L-proline + ATP = L-prolyl-tRNA(Pro) + AMP + diphosphate. Functionally, catalyzes the attachment of proline to tRNA(Pro) in a two-step reaction: proline is first activated by ATP to form Pro-AMP and then transferred to the acceptor end of tRNA(Pro). As ProRS can inadvertently accommodate and process non-cognate amino acids such as alanine and cysteine, to avoid such errors it has two additional distinct editing activities against alanine. One activity is designated as 'pretransfer' editing and involves the tRNA(Pro)-independent hydrolysis of activated Ala-AMP. The other activity is designated 'posttransfer' editing and involves deacylation of mischarged Ala-tRNA(Pro). The misacylated Cys-tRNA(Pro) is not edited by ProRS. The protein is Proline--tRNA ligase of Actinobacillus succinogenes (strain ATCC 55618 / DSM 22257 / CCUG 43843 / 130Z).